A 426-amino-acid polypeptide reads, in one-letter code: LIM/homeobox protein Lhx2 (426 aa).

Positions 14 to 24 (VIDEMDRRQER) are enriched in basic and acidic residues. Residues 14–42 (VIDEMDRRQERGSGISSAIDRGDTETTMP) are disordered. 2 LIM zinc-binding domains span residues 52–104 (CAGC…CKED) and 114–167 (CARC…CRLH). The interval 248 to 268 (DAEHLDRDQPYPSSQKTKRMR) is disordered. The homeobox DNA-binding region spans 264 to 323 (TKRMRTSFKHHQLRTMKSYFAINHNPDAKDLKQLAQKTGLTKRVLQVWFQNARAKFRRNL). Residues 305–321 (KRVLQVWFQNARAKFRR) carry the Nuclear localization signal motif. A compositionally biased stretch (polar residues) spans 326-354 (QENTGVDKTSDATLQTGTPSGPASELSNA). A disordered region spans residues 326-370 (QENTGVDKTSDATLQTGTPSGPASELSNASLSPSSTPTTLTDLTS). The segment covering 355–370 (SLSPSSTPTTLTDLTS) has biased composition (low complexity).

In terms of assembly, interacts (via LIM domains) with CITED2. Interacts with POU4F2. Found in discrete regions of the developing CNS, primarily in diencephalic and telencephalic structures and a subset of lymphoid tissues. Also found in embryonic spinal cord and fetal liver.

The protein resides in the nucleus. Its function is as follows. Acts as a transcriptional activator. Stimulates the promoter of the alpha-glycoprotein gene. Transcriptional regulatory protein involved in the control of cell differentiation in developing lymphoid and neural cell types. The chain is LIM/homeobox protein Lhx2 (Lhx2) from Rattus norvegicus (Rat).